A 244-amino-acid polypeptide reads, in one-letter code: 7-cyano-7-deazaguanine synthase (244 aa).

Phe14 to Val24 contributes to the ATP binding site. Zn(2+)-binding residues include Cys202, Cys217, Cys220, and Cys223.

It belongs to the QueC family. Zn(2+) is required as a cofactor.

It carries out the reaction 7-carboxy-7-deazaguanine + NH4(+) + ATP = 7-cyano-7-deazaguanine + ADP + phosphate + H2O + H(+). Its pathway is purine metabolism; 7-cyano-7-deazaguanine biosynthesis. Its function is as follows. Catalyzes the ATP-dependent conversion of 7-carboxy-7-deazaguanine (CDG) to 7-cyano-7-deazaguanine (preQ(0)). This Burkholderia ambifaria (strain MC40-6) protein is 7-cyano-7-deazaguanine synthase.